The primary structure comprises 888 residues: 3-hydroxy-3-methylglutaryl-coenzyme A reductase (888 aa).

Residues 1–9 (MLSRLFRMH) are Cytoplasmic-facing. The chain crosses the membrane as a helical span at residues 10 to 39 (GLFVASHPWEVIVGTVTLTICMMSMNMFTG). The Lumenal segment spans residues 40–56 (NDKICGWNYECPKFEED). A helical membrane pass occupies residues 57-78 (VLSSDIIILTITRCIAILYIYF). The region spanning 61–218 (DIIILTITRC…MTFFPACVSL (158 aa)) is the SSD domain. An INSIG-binding motif motif is present at residues 75–78 (YIYF). Residues 79 to 89 (QFQNLRQLGSK) lie on the Cytoplasmic side of the membrane. K89 participates in a covalent cross-link: Glycyl lysine isopeptide (Lys-Gly) (interchain with G-Cter in ubiquitin). Residues 90 to 114 (YILGIAGLFTIFSSFVFSTVVIHFL) form a helical membrane-spanning segment. Residues 115–123 (DKELTGLNE) are Lumenal-facing. A helical membrane pass occupies residues 124–149 (ALPFFLLLIDLSRASALAKFALSSNS). The Cytoplasmic segment spans residues 150–159 (QDEVRENIAR). The helical transmembrane segment at 160 to 187 (GMAILGPTFTLDALVECLVIGVGTMSGV) threads the bilayer. Over 188–191 (RQLE) the chain is Lumenal. A helical membrane pass occupies residues 192–220 (IMCCFGCMSVLANYFVFMTFFPACVSLVL). Topologically, residues 221-248 (ELSRESREGRPIWQLSHFARVLEEEENK) are cytoplasmic. A Glycyl lysine isopeptide (Lys-Gly) (interchain with G-Cter in ubiquitin) cross-link involves residue K248. The chain crosses the membrane as a helical span at residues 249–275 (PNPVTQRVKMIMSLGLVLVHAHSRWIA). Topologically, residues 276 to 314 (DPSPQNSTADNSKVSLGLDENVSKRIEPSVSLWQFYLSK) are lumenal. 2 N-linked (GlcNAc...) asparagine glycosylation sites follow: N281 and N296. A helical transmembrane segment spans residues 315 to 339 (MISMDIEQVITLSLALLLAVKYIFF). The Cytoplasmic segment spans residues 340-888 (EQAETESTLS…LEGACTKKAA (549 aa)). Residues E559, K691, and D767 each act as charge relay system in the active site. The Proton donor role is filled by H866. At S872 the chain carries Phosphoserine; by AMPK.

It belongs to the HMG-CoA reductase family. As to quaternary structure, homotetramer. Homodimer. Interacts (via its SSD) with INSIG1; the interaction, accelerated by sterols, leads to the recruitment of HMGCR to AMFR/gp78 for its ubiquitination by the sterol-mediated ERAD pathway. Interacts with UBIAD1. In terms of processing, undergoes sterol-mediated ubiquitination and ER-associated degradation (ERAD). Accumulation of sterols in the endoplasmic reticulum (ER) membrane, triggers binding of the reductase to the ER membrane protein INSIG1 or INSIG2. The INSIG1 binding leads to the recruitment of the ubiquitin ligase, AMFR/gp78, RNF139 or RNF145, initiating ubiquitination of the reductase. The ubiquitinated reductase is then extracted from the ER membrane and delivered to cytosolic 26S proteosomes by a mechanism probably mediated by the ATPase Valosin-containing protein VCP/p97. The INSIG2-binding leads to the recruitment of the ubiquitin ligase RNF139, initiating ubiquitination of the reductase. Lys-248 is the main site of ubiquitination. Ubiquitination is enhanced by the presence of a geranylgeranylated protein. Post-translationally, N-glycosylated. Deglycosylated by NGLY1 on release from the endoplasmic reticulum (ER) in a sterol-mediated manner. Phosphorylated. Phosphorylation at Ser-872 reduces the catalytic activity.

The protein localises to the endoplasmic reticulum membrane. The protein resides in the peroxisome membrane. The enzyme catalyses (R)-mevalonate + 2 NADP(+) + CoA = (3S)-3-hydroxy-3-methylglutaryl-CoA + 2 NADPH + 2 H(+). Its pathway is metabolic intermediate biosynthesis; (R)-mevalonate biosynthesis; (R)-mevalonate from acetyl-CoA: step 3/3. Regulated by a negative feedback mechanism through sterols and non-sterol metabolites derived from mevalonate. Phosphorylation at Ser-872 down-regulates the catalytic activity. Its function is as follows. Catalyzes the conversion of (3S)-hydroxy-3-methylglutaryl-CoA (HMG-CoA) to mevalonic acid, the rate-limiting step in the synthesis of cholesterol and other isoprenoids, thus plays a critical role in cellular cholesterol homeostasis. This Oryctolagus cuniculus (Rabbit) protein is 3-hydroxy-3-methylglutaryl-coenzyme A reductase (HMGCR).